Consider the following 311-residue polypeptide: Ketoisovalerate oxidoreductase subunit VorB (311 aa).

As to quaternary structure, heterotetramer of one alpha, one beta, one delta and one gamma chain.

The catalysed reaction is 3-methyl-2-oxobutanoate + 2 oxidized [2Fe-2S]-[ferredoxin] + CoA = 2-methylpropanoyl-CoA + 2 reduced [2Fe-2S]-[ferredoxin] + CO2 + H(+). The protein is Ketoisovalerate oxidoreductase subunit VorB (vorB) of Pyrococcus abyssi (strain GE5 / Orsay).